The chain runs to 279 residues: BEN domain-containing protein 6 (279 aa).

A compositionally biased stretch (polar residues) spans 1 to 15 (MQKIVQTDEITNTQA). Disordered stretches follow at residues 1–65 (MQKI…LAEL) and 134–172 (RATN…TDEK). Residues 62–99 (LAELSKEELCAKIKSLKEKLTNTRKENSRLRQSLVMLQ) adopt a coiled-coil conformation. The segment covering 134–148 (RATNNSSPDSFASTC) has biased composition (polar residues). Residues 162–172 (KPEEEHQTDEK) show a composition bias toward basic and acidic residues. The 101-residue stretch at 171-271 (EKQFQIEKWQ…NCTKKPNLSK (101 aa)) folds into the BEN domain.

As to quaternary structure, interacts (via BEN domain) with RBPJ.

The protein resides in the nucleus. Acts as a corepressor of recombining binding protein suppressor hairless (RBPJ) and inhibits Notch signaling in neural stem cells, thereby opposing their self-renewal and promoting neurogenesis. This Homo sapiens (Human) protein is BEN domain-containing protein 6 (BEND6).